The primary structure comprises 259 residues: Snake venom serine protease homolog rhinocerase 3 (259 aa).

Positions 1–17 are cleaved as a signal peptide; the sequence is VLIRVLANLLLLQLSYA. A propeptide spanning residues 18-23 is cleaved from the precursor; it reads QESSEL. The region spanning 24–250 is the Peptidase S1 domain; sequence VIGGDECDIN…YTDWIEGIIA (227 aa). 6 disulfide bridges follow: C30-C164, C51-C67, C99-C257, C143-C211, C175-C190, and C201-C226. The N-linked (GlcNAc...) asparagine glycan is linked to N80. N252 carries N-linked (GlcNAc...) asparagine glycosylation.

It belongs to the peptidase S1 family. Snake venom subfamily. In terms of tissue distribution, expressed by the venom gland.

The protein localises to the secreted. In terms of biological role, snake venom serine protease homolog that may act in the hemostasis system of the prey. This chain is Snake venom serine protease homolog rhinocerase 3, found in Bitis rhinoceros (West African gaboon viper).